A 1096-amino-acid polypeptide reads, in one-letter code: MTEHHMDVQADATQSASESKAMAAPKGKFSEAEEGFLSTSPDSANGDAQQAHTHTHIISHTHSKGAAKTQTQTQNGNGTLGMGLGAPMLPGGSRQLLRQAFYQCSCPEQCVTLNNILDSFKAPLSEDQAWALIYQFGSLYYKVAAQAHKSGGDYEADLPSRFELHFHRDGNVHFSGAERLPELVESQEQEASQQEQQQKQPQMDDSATSSVDSNAALDRAFDNNNHEHHHHHHHQHHHPVDSNAALDRAHHTPLVVSHRKIISEMAEIVYTALDYNLPEDEECQMSQELENLFNFMTADETDEDCIDEGIDEGDKRWDDEAEEERNDTKELEHIIETCRNHLQKPALADNHYKAVCRALATETIELRVFLQQVLNNGAEKLIKAAESSPTTQKELAKLGFNDWARFWVQVIDELRRGVRLKKSNFERTPIEYELTPYEILMGDIRAKKYQLRKVMVNGDIPPRVKKDAHAMILEFIRSRPPLKKASERQLGPPRMCTPTPREQLMESIRQGKELKQITPPEAPPLRQRMLPSANSTLSRSRQRLIKVDFSQLQDDELFFDDSSMSSSHSTAATHQHHQQHQPHHAHLAELHRCSQPKMPPYPFGGYMVPSQARQECQATATQLRPRRTMDTSAPRQTLPQPQAQARPPPPAEPSFTEDEYHRFFDNALESYDLATQCESRRASLRRHTIVGCQSNLEETHSMPPTRPESRQSDDAGSQSQSGASSEAPGIRKSPLMEGDHSQTTDGPPRLDEAHSTSSLGPWNKSFMDKQTWMERGDDRLSVTLAEIVHIRSVMTKAELEGLPMDVRVKEDVEKRRVCFLCLRTRFSFFGPWGIQCKLCQRTVCAKCYTKMRIPSEHFRNVPLVLISPSLLSSPASSSTPSPSHHAHQAHSSSTGNIMDDQFPKSLIERLLRSESDRKTRSTVGSAPSSPKHQRSNMSTPGISVGPGAGASTSAAPGHAVEALHDQAAMSASYSSAMRPSGVMQHHQKHHYNNAMSRSMEGPRSLPVHSPAYRPLSNSSTLERKSRFSRGFALFSSGSHLAQTQDQKENLRGEQVPVCNDCQGLVNEITSSVKQKRSSARNRTIQNLTLDLTPVWK.

Disordered regions lie at residues 1 to 79 (MTEH…GNGT) and 184 to 211 (VESQ…TSSV). Residues 37–51 (LSTSPDSANGDAQQA) are compositionally biased toward polar residues. Residues 53 to 65 (THTHIISHTHSKG) are compositionally biased toward basic residues. 2 stretches are compositionally biased toward low complexity: residues 66–77 (AAKTQTQTQNGN) and 189–201 (QEAS…QKQP). Positions 111–366 (VTLNNILDSF…RALATETIEL (256 aa)) constitute a KIND domain. Positions 315–340 (KRWDDEAEEERNDTKELEHIIETCRN) form a coiled coil. WH2 domains are found at residues 436 to 454 (PYEI…LRKV) and 500 to 517 (PREQ…LKQI). Disordered stretches follow at residues 560–588 (DDSS…AHLA), 614–656 (QECQ…PSFT), and 693–762 (QSNL…LGPW). Over residues 574–585 (HQHHQQHQPHHA) the composition is skewed to basic residues. 2 stretches are compositionally biased toward low complexity: residues 633-645 (APRQ…QAQA) and 714-725 (DAGSQSQSGASS). The span at 737–754 (EGDHSQTTDGPPRLDEAH) shows a compositional bias: basic and acidic residues. Residues 780 to 800 (LSVTLAEIVHIRSVMTKAELE) form a spir-box region. Positions 874 to 894 (PASSSTPSPSHHAHQAHSSST) are enriched in low complexity. Disordered stretches follow at residues 874 to 899 (PASS…NIMD), 912 to 958 (RSES…APGH), and 997 to 1021 (RSME…SSTL). The segment covering 921–941 (STVGSAPSSPKHQRSNMSTPG) has biased composition (polar residues).

It belongs to the spire family. Interacts with bsk, Rho1, Rac1, Cdc42 and wash. Interacts with capu. Post-translationally, phosphorylated by Jnk kinase (bsk).

The protein localises to the cytoplasm. The protein resides in the cytoskeleton. It is found in the perinuclear region. Its subcellular location is the cell membrane. It localises to the cytoplasmic vesicle membrane. Its function is as follows. Acts as an actin nucleation factor, remains associated with the slow-growing pointed end of the new filament. Promotes dissociation of capu from the barbed end of actin filaments. Involved in intracellular vesicle transport along actin fibers, providing a novel link between actin cytoskeleton dynamics and intracellular transport. Required for localization of determinants within the developing oocyte to the posterior pole and to the dorsal anterior corner. Links Rho family signaling and Jnk function to the actin cytoskeleton. In Drosophila pseudoobscura pseudoobscura (Fruit fly), this protein is Protein spire.